A 90-amino-acid polypeptide reads, in one-letter code: Small ribosomal subunit protein uS17 (90 aa).

It belongs to the universal ribosomal protein uS17 family. Part of the 30S ribosomal subunit.

One of the primary rRNA binding proteins, it binds specifically to the 5'-end of 16S ribosomal RNA. The chain is Small ribosomal subunit protein uS17 from Burkholderia cenocepacia (strain ATCC BAA-245 / DSM 16553 / LMG 16656 / NCTC 13227 / J2315 / CF5610) (Burkholderia cepacia (strain J2315)).